An 813-amino-acid polypeptide reads, in one-letter code: LPS-assembly protein LptD (813 aa).

The first 22 residues, 1-22 (MRRALRLLPLPLSIAICLPAMA), serve as a signal peptide directing secretion.

The protein belongs to the LptD family. In terms of assembly, component of the lipopolysaccharide transport and assembly complex. Interacts with LptE and LptA.

The protein localises to the cell outer membrane. In terms of biological role, together with LptE, is involved in the assembly of lipopolysaccharide (LPS) at the surface of the outer membrane. This chain is LPS-assembly protein LptD, found in Xanthomonas oryzae pv. oryzae (strain KACC10331 / KXO85).